The chain runs to 112 residues: Photosystem II reaction center Psb28 protein (112 aa).

Belongs to the Psb28 family. As to quaternary structure, part of the photosystem II complex.

The protein localises to the cellular thylakoid membrane. The polypeptide is Photosystem II reaction center Psb28 protein (Synechococcus elongatus (strain ATCC 33912 / PCC 7942 / FACHB-805) (Anacystis nidulans R2)).